Reading from the N-terminus, the 369-residue chain is Probable peptidoglycan glycosyltransferase FtsW (369 aa).

Transmembrane regions (helical) follow at residues 11–31 (LLSVTIILLIFSIIMVGSSSV), 48–68 (NFIHSIISILCMIFVFNVPIY), 77–97 (LILCSIILLLTLNYFGISNHG), 134–151 (TSTIQLISIILIVSKLLL), 154–174 (PDFGTLVILYSSLLFMLFLIG), 177–197 (FLFLSASSAIFTTIVLSLIYF), 265–285 (LGYLGIAMIVISLFFIFFQGM), and 306–326 (ISLLIIIQSIINIGSSIGILP).

This sequence belongs to the SEDS family. FtsW subfamily.

Its subcellular location is the cell inner membrane. The catalysed reaction is [GlcNAc-(1-&gt;4)-Mur2Ac(oyl-L-Ala-gamma-D-Glu-L-Lys-D-Ala-D-Ala)](n)-di-trans,octa-cis-undecaprenyl diphosphate + beta-D-GlcNAc-(1-&gt;4)-Mur2Ac(oyl-L-Ala-gamma-D-Glu-L-Lys-D-Ala-D-Ala)-di-trans,octa-cis-undecaprenyl diphosphate = [GlcNAc-(1-&gt;4)-Mur2Ac(oyl-L-Ala-gamma-D-Glu-L-Lys-D-Ala-D-Ala)](n+1)-di-trans,octa-cis-undecaprenyl diphosphate + di-trans,octa-cis-undecaprenyl diphosphate + H(+). The protein operates within cell wall biogenesis; peptidoglycan biosynthesis. Peptidoglycan polymerase that is essential for cell division. The protein is Probable peptidoglycan glycosyltransferase FtsW of Riesia pediculicola (strain USDA).